Reading from the N-terminus, the 85-residue chain is MTLKQRYQQAGKEASWALSLSILYVIGWCLCAYLPKETQGPIGFPLWFELSCIYLPILFIVIGHWIIKIIFQDISLEINDQGNQK.

2 helical membrane-spanning segments follow: residues 16–34 (WALS…CAYL) and 50–71 (LSCI…KIIF).

The protein to E.coli YhdT.

It is found in the cell membrane. This is an uncharacterized protein from Haemophilus influenzae (strain ATCC 51907 / DSM 11121 / KW20 / Rd).